Reading from the N-terminus, the 509-residue chain is Coiled-coil domain-containing protein 181 (509 aa).

Over residues Glu46–Asp82 the composition is skewed to basic and acidic residues. Disordered stretches follow at residues Glu46–Asp120 and Pro241–Glu367. Polar residues-rich tracts occupy residues Asn243–Gly266 and Thr300–Cys334. Residues Leu335–Val375 adopt a coiled-coil conformation. Residues Arg338–Glu367 show a composition bias toward basic and acidic residues.

This sequence belongs to the CCDC181 family. In terms of assembly, homodimer. Interacts with HOOK1. Interacts with HOOK2. Interacts with HOOK3.

It localises to the cytoplasm. The protein localises to the cytoskeleton. Its subcellular location is the cell projection. It is found in the cilium. The protein resides in the flagellum. Functionally, microtubule-binding protein that localizes to the microtubular manchette of elongating spermatids. The sequence is that of Coiled-coil domain-containing protein 181 from Homo sapiens (Human).